Reading from the N-terminus, the 257-residue chain is Snake venom serine protease rhinocerase 4 (257 aa).

The N-terminal stretch at 1-17 (VLIRVLANLLVLQLSYA) is a signal peptide. The propeptide occupies 18-23 (QKSSEL). A Peptidase S1 domain is found at 24-248 (VIGGAECNIN…YTDWIRSIIG (225 aa)). 6 cysteine pairs are disulfide-bonded: C30/C162, C49/C65, C97/C255, C141/C209, C173/C188, and C199/C224. Residue N43 is glycosylated (N-linked (GlcNAc...) asparagine). H64 functions as the Charge relay system in the catalytic mechanism. N-linked (GlcNAc...) asparagine glycans are attached at residues N78 and N100. The active-site Charge relay system is D109. The Charge relay system role is filled by S203. N250 is a glycosylation site (N-linked (GlcNAc...) asparagine).

Belongs to the peptidase S1 family. Snake venom subfamily. Expressed by the venom gland.

The protein localises to the secreted. Its function is as follows. Snake venom serine protease that may act in the hemostasis system of the prey. In Bitis rhinoceros (West African gaboon viper), this protein is Snake venom serine protease rhinocerase 4.